Consider the following 149-residue polypeptide: MKKEKRQRLIKQFVKEYEIEKQERLVELLAKKDVLVTQATVSRDIRELNVTKVPSQEGLMIYKIFSEEHLQTDIKLKKKLREVVVKIDCVDQLMVIKTLPGNAHVIGVLFDELDWKEKIGCICGNDTCLIISQSKSDREILEERLNLII.

The protein belongs to the ArgR family.

Its subcellular location is the cytoplasm. The protein operates within amino-acid degradation; L-arginine degradation via ADI pathway. Regulates the transcription of the arc operon, involved in arginine catabolism. In Bacillus cereus (strain ATCC 10987 / NRS 248), this protein is Arginine regulator (argR1).